We begin with the raw amino-acid sequence, 1515 residues long: Glutamate synthase [NADPH] large chain (1515 aa).

A propeptide spanning residues 1–36 (MTTELNQGEQFVADFRANAAALTTANAYNPEDEHDA) is cleaved from the precursor. The active-site For GATase activity is Cys37. The 396-residue stretch at 37 to 432 (CGVGFIAAID…PGEMIAVDLQ (396 aa)) folds into the Glutamine amidotransferase type-2 domain. Residues 916 to 937 (AKSDSGEGGEDPARFRPDKNGD) are disordered. Residues 926-936 (DPARFRPDKNG) show a composition bias toward basic and acidic residues. Residues 1085 to 1142 (LSEV…IMVR) and 1086 to 1142 (SEVH…IMVR) each bind FMN. [3Fe-4S] cluster contacts are provided by Cys1138, Cys1144, and Cys1149.

It belongs to the glutamate synthase family. In terms of assembly, aggregate of 4 catalytic active heterodimers, consisting of a large and a small subunit. The cofactor is [3Fe-4S] cluster. Requires FAD as cofactor. FMN is required as a cofactor.

The enzyme catalyses 2 L-glutamate + NADP(+) = L-glutamine + 2-oxoglutarate + NADPH + H(+). Its pathway is amino-acid biosynthesis; L-glutamate biosynthesis via GLT pathway; L-glutamate from 2-oxoglutarate and L-glutamine (NADP(+) route): step 1/1. It participates in energy metabolism; nitrogen metabolism. This Azospirillum brasilense protein is Glutamate synthase [NADPH] large chain (gltB).